We begin with the raw amino-acid sequence, 226 residues long: Thiamine-phosphate synthase (226 aa).

Residues 46 to 50 and aspartate 83 each bind 4-amino-2-methyl-5-(diphosphooxymethyl)pyrimidine; that span reads QFRDK. Positions 84 and 103 each coordinate Mg(2+). Residue serine 122 coordinates 4-amino-2-methyl-5-(diphosphooxymethyl)pyrimidine. 2-[(2R,5Z)-2-carboxy-4-methylthiazol-5(2H)-ylidene]ethyl phosphate is bound at residue 149–151; sequence TQS. Residue lysine 152 participates in 4-amino-2-methyl-5-(diphosphooxymethyl)pyrimidine binding. 2-[(2R,5Z)-2-carboxy-4-methylthiazol-5(2H)-ylidene]ethyl phosphate-binding positions include glycine 181 and 201–202; that span reads IT.

It belongs to the thiamine-phosphate synthase family. The cofactor is Mg(2+).

It catalyses the reaction 2-[(2R,5Z)-2-carboxy-4-methylthiazol-5(2H)-ylidene]ethyl phosphate + 4-amino-2-methyl-5-(diphosphooxymethyl)pyrimidine + 2 H(+) = thiamine phosphate + CO2 + diphosphate. It carries out the reaction 2-(2-carboxy-4-methylthiazol-5-yl)ethyl phosphate + 4-amino-2-methyl-5-(diphosphooxymethyl)pyrimidine + 2 H(+) = thiamine phosphate + CO2 + diphosphate. The catalysed reaction is 4-methyl-5-(2-phosphooxyethyl)-thiazole + 4-amino-2-methyl-5-(diphosphooxymethyl)pyrimidine + H(+) = thiamine phosphate + diphosphate. It participates in cofactor biosynthesis; thiamine diphosphate biosynthesis; thiamine phosphate from 4-amino-2-methyl-5-diphosphomethylpyrimidine and 4-methyl-5-(2-phosphoethyl)-thiazole: step 1/1. Condenses 4-methyl-5-(beta-hydroxyethyl)thiazole monophosphate (THZ-P) and 2-methyl-4-amino-5-hydroxymethyl pyrimidine pyrophosphate (HMP-PP) to form thiamine monophosphate (TMP). This is Thiamine-phosphate synthase from Haemophilus influenzae (strain PittGG).